Here is a 469-residue protein sequence, read N- to C-terminus: Ribulose bisphosphate carboxylase large chain (469 aa).

The residue at position 5 (lysine 5) is an N6,N6,N6-trimethyllysine. 2 residues coordinate substrate: asparagine 114 and threonine 164. The active-site Proton acceptor is lysine 166. Lysine 168 contacts substrate. Mg(2+) is bound by residues lysine 192, aspartate 194, and glutamate 195. Residue lysine 192 is modified to N6-carboxylysine. Residue histidine 285 is the Proton acceptor of the active site. 3 residues coordinate substrate: arginine 286, histidine 318, and serine 370.

This sequence belongs to the RuBisCO large chain family. Type I subfamily. Heterohexadecamer of 8 large chains and 8 small chains; disulfide-linked. The disulfide link is formed within the large subunit homodimers. Mg(2+) is required as a cofactor. In terms of processing, the disulfide bond which can form in the large chain dimeric partners within the hexadecamer appears to be associated with oxidative stress and protein turnover.

It is found in the plastid. The protein resides in the chloroplast. The enzyme catalyses 2 (2R)-3-phosphoglycerate + 2 H(+) = D-ribulose 1,5-bisphosphate + CO2 + H2O. It catalyses the reaction D-ribulose 1,5-bisphosphate + O2 = 2-phosphoglycolate + (2R)-3-phosphoglycerate + 2 H(+). In terms of biological role, ruBisCO catalyzes two reactions: the carboxylation of D-ribulose 1,5-bisphosphate, the primary event in carbon dioxide fixation, as well as the oxidative fragmentation of the pentose substrate in the photorespiration process. Both reactions occur simultaneously and in competition at the same active site. The sequence is that of Ribulose bisphosphate carboxylase large chain from Nicandra physalodes (Apple-of-Peru).